A 179-amino-acid chain; its full sequence is ATP synthase subunit delta (179 aa).

Belongs to the ATPase delta chain family. In terms of assembly, F-type ATPases have 2 components, F(1) - the catalytic core - and F(0) - the membrane proton channel. F(1) has five subunits: alpha(3), beta(3), gamma(1), delta(1), epsilon(1). F(0) has three main subunits: a(1), b(2) and c(10-14). The alpha and beta chains form an alternating ring which encloses part of the gamma chain. F(1) is attached to F(0) by a central stalk formed by the gamma and epsilon chains, while a peripheral stalk is formed by the delta and b chains.

It localises to the cell inner membrane. Its function is as follows. F(1)F(0) ATP synthase produces ATP from ADP in the presence of a proton or sodium gradient. F-type ATPases consist of two structural domains, F(1) containing the extramembraneous catalytic core and F(0) containing the membrane proton channel, linked together by a central stalk and a peripheral stalk. During catalysis, ATP synthesis in the catalytic domain of F(1) is coupled via a rotary mechanism of the central stalk subunits to proton translocation. This protein is part of the stalk that links CF(0) to CF(1). It either transmits conformational changes from CF(0) to CF(1) or is implicated in proton conduction. The sequence is that of ATP synthase subunit delta from Maricaulis maris (strain MCS10) (Caulobacter maris).